The chain runs to 113 residues: Putative pterin-4-alpha-carbinolamine dehydratase (113 aa).

It belongs to the pterin-4-alpha-carbinolamine dehydratase family.

The catalysed reaction is (4aS,6R)-4a-hydroxy-L-erythro-5,6,7,8-tetrahydrobiopterin = (6R)-L-erythro-6,7-dihydrobiopterin + H2O. This Nitrosococcus oceani (strain ATCC 19707 / BCRC 17464 / JCM 30415 / NCIMB 11848 / C-107) protein is Putative pterin-4-alpha-carbinolamine dehydratase.